A 227-amino-acid polypeptide reads, in one-letter code: Orotidine 5'-phosphate decarboxylase (227 aa).

Substrate contacts are provided by residues aspartate 8, lysine 30, 59 to 68 (DLKLYDIPYT), threonine 118, arginine 178, glutamine 187, glycine 207, and arginine 208. The active-site Proton donor is lysine 61.

This sequence belongs to the OMP decarboxylase family. Type 1 subfamily. As to quaternary structure, homodimer.

The enzyme catalyses orotidine 5'-phosphate + H(+) = UMP + CO2. Its pathway is pyrimidine metabolism; UMP biosynthesis via de novo pathway; UMP from orotate: step 2/2. Its function is as follows. Catalyzes the decarboxylation of orotidine 5'-monophosphate (OMP) to uridine 5'-monophosphate (UMP). This Helicobacter pylori (strain Shi470) protein is Orotidine 5'-phosphate decarboxylase.